The following is a 331-amino-acid chain: Ketol-acid reductoisomerase (NADP(+)) (331 aa).

Residues 2-182 enclose the KARI N-terminal Rossmann domain; that stretch reads AKVYYDEDAN…GGTKGGVLET (181 aa). Residues 25–28, serine 51, serine 53, and 83–86 each bind NADP(+); these read YGSQ and DEKQ. The active site involves histidine 108. Glycine 134 serves as a coordination point for NADP(+). One can recognise a KARI C-terminal knotted domain in the interval 183–328; sequence TFKDETETDL…VELRAMMPWL (146 aa). The Mg(2+) site is built by aspartate 191, glutamate 195, glutamate 227, and glutamate 231. Serine 252 lines the substrate pocket.

The protein belongs to the ketol-acid reductoisomerase family. Mg(2+) serves as cofactor.

It catalyses the reaction (2R)-2,3-dihydroxy-3-methylbutanoate + NADP(+) = (2S)-2-acetolactate + NADPH + H(+). It carries out the reaction (2R,3R)-2,3-dihydroxy-3-methylpentanoate + NADP(+) = (S)-2-ethyl-2-hydroxy-3-oxobutanoate + NADPH + H(+). It functions in the pathway amino-acid biosynthesis; L-isoleucine biosynthesis; L-isoleucine from 2-oxobutanoate: step 2/4. It participates in amino-acid biosynthesis; L-valine biosynthesis; L-valine from pyruvate: step 2/4. Functionally, involved in the biosynthesis of branched-chain amino acids (BCAA). Catalyzes an alkyl-migration followed by a ketol-acid reduction of (S)-2-acetolactate (S2AL) to yield (R)-2,3-dihydroxy-isovalerate. In the isomerase reaction, S2AL is rearranged via a Mg-dependent methyl migration to produce 3-hydroxy-3-methyl-2-ketobutyrate (HMKB). In the reductase reaction, this 2-ketoacid undergoes a metal-dependent reduction by NADPH to yield (R)-2,3-dihydroxy-isovalerate. The sequence is that of Ketol-acid reductoisomerase (NADP(+)) from Clostridium novyi (strain NT).